Consider the following 107-residue polypeptide: Large ribosomal subunit protein bL21 (107 aa).

It belongs to the bacterial ribosomal protein bL21 family. In terms of assembly, part of the 50S ribosomal subunit. Contacts protein L20.

Its function is as follows. This protein binds to 23S rRNA in the presence of protein L20. In Buchnera aphidicola subsp. Schizaphis graminum (strain Sg), this protein is Large ribosomal subunit protein bL21.